The chain runs to 85 residues: UPF0434 protein HNE_3545 (85 aa).

The protein belongs to the UPF0434 family.

This Hyphomonas neptunium (strain ATCC 15444) protein is UPF0434 protein HNE_3545.